A 65-amino-acid polypeptide reads, in one-letter code: Large ribosomal subunit protein bL28 (65 aa).

This sequence belongs to the bacterial ribosomal protein bL28 family.

This Bifidobacterium animalis subsp. lactis (strain AD011) protein is Large ribosomal subunit protein bL28.